Consider the following 256-residue polypeptide: Triosephosphate isomerase (256 aa).

9–11 contacts substrate; sequence NWK. The active-site Electrophile is the H97. E169 functions as the Proton acceptor in the catalytic mechanism. Substrate contacts are provided by residues G175, S214, and 235-236; that span reads GG.

It belongs to the triosephosphate isomerase family. Homodimer.

Its subcellular location is the cytoplasm. It carries out the reaction D-glyceraldehyde 3-phosphate = dihydroxyacetone phosphate. It participates in carbohydrate biosynthesis; gluconeogenesis. The protein operates within carbohydrate degradation; glycolysis; D-glyceraldehyde 3-phosphate from glycerone phosphate: step 1/1. Functionally, involved in the gluconeogenesis. Catalyzes stereospecifically the conversion of dihydroxyacetone phosphate (DHAP) to D-glyceraldehyde-3-phosphate (G3P). This is Triosephosphate isomerase from Moritella marina (Vibrio marinus).